A 505-amino-acid polypeptide reads, in one-letter code: Trans-cinnamate 4-monooxygenase C4H2 (505 aa).

2 consecutive short sequence motifs (nuclear localization signal) follow at residues 161–168 (VKKMKESN) and 247–254 (EKRLKLFK). Heme is bound at residue cysteine 447.

It belongs to the cytochrome P450 family. Requires heme as cofactor.

Its subcellular location is the nucleus. It catalyses the reaction (E)-cinnamate + reduced [NADPH--hemoprotein reductase] + O2 = (E)-4-coumarate + oxidized [NADPH--hemoprotein reductase] + H2O + H(+). It functions in the pathway phenylpropanoid metabolism; trans-4-coumarate biosynthesis; trans-4-coumarate from trans-cinnamate: step 1/1. In terms of biological role, component of the floral volatile benzenoid/phenylpropanoid (FVBP) biosynthetic pathway that controls carbon flux to pigments essential for pollination or UV protection, to numerous pytoalexins synthesized by plants when challenged by pathogens, and to lignins. This is Trans-cinnamate 4-monooxygenase C4H2 from Petunia hybrida (Petunia).